The following is a 95-amino-acid chain: Integration host factor subunit beta (95 aa).

It belongs to the bacterial histone-like protein family. In terms of assembly, heterodimer of an alpha and a beta chain.

Its function is as follows. This protein is one of the two subunits of integration host factor, a specific DNA-binding protein that functions in genetic recombination as well as in transcriptional and translational control. The sequence is that of Integration host factor subunit beta from Jannaschia sp. (strain CCS1).